We begin with the raw amino-acid sequence, 983 residues long: Protein CLASP-3 (983 aa).

2 disordered regions span residues 356–393 (YPNR…TQKA) and 666–690 (SNNI…QKES). Low complexity predominate over residues 359–372 (RPGSRTRTSSITST). The stretch at 918–956 (ITPTIIKAYQSTSSTVRKTVVYCLVAMVNRVGEQRMTPH) is one HEAT repeat.

Belongs to the CLASP family.

The protein localises to the cytoplasm. It is found in the cytoskeleton. Microtubule plus-end tracking protein that promotes the stabilization of dynamic microtubules. This is Protein CLASP-3 (cls-3) from Caenorhabditis elegans.